The chain runs to 174 residues: Large ribosomal subunit protein uL16 (174 aa).

It belongs to the universal ribosomal protein uL16 family.

In Methanocaldococcus jannaschii (strain ATCC 43067 / DSM 2661 / JAL-1 / JCM 10045 / NBRC 100440) (Methanococcus jannaschii), this protein is Large ribosomal subunit protein uL16.